A 588-amino-acid chain; its full sequence is Aspartate--tRNA ligase (588 aa).

Residue glutamate 172 coordinates L-aspartate. Residues 196-199 (QLFK) form an aspartate region. Arginine 218 lines the L-aspartate pocket. Residues 218-220 (RDE) and glutamine 227 each bind ATP. Position 449 (histidine 449) interacts with L-aspartate. ATP is bound at residue glutamate 483. Residue arginine 490 participates in L-aspartate binding. Position 535–538 (535–538 (GLDR)) interacts with ATP.

This sequence belongs to the class-II aminoacyl-tRNA synthetase family. Type 1 subfamily. Homodimer.

It is found in the cytoplasm. The enzyme catalyses tRNA(Asp) + L-aspartate + ATP = L-aspartyl-tRNA(Asp) + AMP + diphosphate. Functionally, catalyzes the attachment of L-aspartate to tRNA(Asp) in a two-step reaction: L-aspartate is first activated by ATP to form Asp-AMP and then transferred to the acceptor end of tRNA(Asp). The chain is Aspartate--tRNA ligase from Haemophilus influenzae (strain PittGG).